Here is a 508-residue protein sequence, read N- to C-terminus: Pyruvate kinase, cytosolic isozyme (508 aa).

Residue Arg48 participates in substrate binding. K(+)-binding residues include Asn50, Ser52, Asp82, and Thr83. 50-53 provides a ligand contact to ATP; sequence NFSH. ATP contacts are provided by Arg89 and Lys174. A Mg(2+)-binding site is contributed by Glu240. Substrate contacts are provided by Gly263, Asp264, and Thr296. Asp264 contributes to the Mg(2+) binding site.

This sequence belongs to the pyruvate kinase family. Homotetramer. Mg(2+) serves as cofactor. K(+) is required as a cofactor.

Its subcellular location is the cytoplasm. It catalyses the reaction pyruvate + ATP = phosphoenolpyruvate + ADP + H(+). It participates in carbohydrate degradation; glycolysis; pyruvate from D-glyceraldehyde 3-phosphate: step 5/5. In Nicotiana tabacum (Common tobacco), this protein is Pyruvate kinase, cytosolic isozyme.